The sequence spans 1291 residues: Tat-binding homolog 7 (1291 aa).

The disordered stretch occupies residues 1–345 (MPRSDGFSPR…HNRGERERGR (345 aa)). The span at 64 to 82 (RYYEEEYHEAISSEEDERR) shows a compositional bias: basic and acidic residues. A compositionally biased stretch (polar residues) spans 88 to 99 (SSNSMTYRQQVM). Residues 226–257 (EEEEEGAEEDEQSGEKDPEEEEDDSSNAESSE) show a composition bias toward acidic residues. Residues 298–311 (NRHHRNRNGSRRRR) show a composition bias toward basic residues. An ATP-binding site is contributed by 432 to 439 (GPPGTGKT). One can recognise a Bromo domain in the interval 914–1022 (ALQRQMRLFF…DAIDDLIECE (109 aa)). Residues 1110-1194 (KSEEGTSTST…MKDASKDSTP (85 aa)) are disordered. Basic residues predominate over residues 1128–1142 (NKKKLLKKKKGQKKS). The span at 1148 to 1164 (EEHDEDSTVEDAGEDTI) shows a compositional bias: acidic residues. The segment covering 1168 to 1190 (LEIKKNQETPNSEHDIEMKDASK) has biased composition (basic and acidic residues).

It belongs to the AAA ATPase family.

Its function is as follows. Thought to form a complex that enhances transcription from repetitive DNA sequences by modulating chromatin structure. The sequence is that of Tat-binding homolog 7 (lex-1) from Caenorhabditis elegans.